We begin with the raw amino-acid sequence, 71 residues long: Large ribosomal subunit protein bL31 (71 aa).

4 residues coordinate Zn(2+): Cys16, Cys18, Cys37, and Cys40.

Belongs to the bacterial ribosomal protein bL31 family. Type A subfamily. Part of the 50S ribosomal subunit. Zn(2+) serves as cofactor.

Functionally, binds the 23S rRNA. This is Large ribosomal subunit protein bL31 from Solidesulfovibrio magneticus (strain ATCC 700980 / DSM 13731 / RS-1) (Desulfovibrio magneticus).